A 1312-amino-acid polypeptide reads, in one-letter code: MSRIEKMSILGVRSFGIEDKDKQIITFFSPLTILVGPNGAGKTTIIECLKYICTGDFPPGTKGNTFVHDPKVAQETDVRAQIRLQFRDVNGELIAVQRSMVCTQKSKKTEFKTLEGVITRTKHGEKVSLSSKCAEIDREMISSLGVSKAVLNNVIFCHQEDSNWPLSEGKALKQKFDEIFSATRYIKALETLRQVRQTQGQKVKEYQMELKYLKQYKEKACEIRDQITSKEAQLTSSKEIVKSYENELDPLKNRLKEIEHNLSKIMKLDNEIKALDSRKKQMEKDNSELEEKMEKVFQGTDEQLNDLYHNHQRTVREKERKLVDCHRELEKLNKESRLLNQEKSELLVEQGRLQLQADRHQEHIRARDSLIQSLATQLELDGFERGPFSERQIKNFHKLVRERQEGEAKTANQLMNDFAEKETLKQKQIDEIRDKKTGLGRIIELKSEILSKKQNELKNVKYELQQLEGSSDRILELDQELIKAERELSKAEKNSNVETLKMEVISLQNEKADLDRTLRKLDQEMEQLNHHTTTRTQMEMLTKDKADKDEQIRKIKSRHSDELTSLLGYFPNKKQLEDWLHSKSKEINQTRDRLAKLNKELASSEQNKNHINNELKRKEEQLSSYEDKLFDVCGSQDFESDLDRLKEEIEKSSKQRAMLAGATAVYSQFITQLTDENQSCCPVCQRVFQTEAELQEVISDLQSKLRLAPDKLKSTESELKKKEKRRDEMLGLVPMRQSIIDLKEKEIPELRNKLQNVNRDIQRLKNDIEEQETLLGTIMPEEESAKVCLTDVTIMERFQMELKDVERKIAQQAAKLQGIDLDRTVQQVNQEKQEKQHKLDTVSSKIELNRKLIQDQQEQIQHLKSTTNELKSEKLQISTNLQRRQQLEEQTVELSTEVQSLYREIKDAKEQVSPLETTLEKFQQEKEELINKKNTSNKIAQDKLNDIKEKVKNIHGYMKDIENYIQDGKDDYKKQKETELNKVIAQLSECEKHKEKINEDMRLMRQDIDTQKIQERWLQDNLTLRKRNEELKEVEEERKQHLKEMGQMQVLQMKSEHQKLEENIDNIKRNHNLALGRQKGYEEEIIHFKKELREPQFRDAEEKYREMMIVMRTTELVNKDLDIYYKTLDQAIMKFHSMKMEEINKIIRDLWRSTYRGQDIEYIEIRSDADENVSASDKRRNYNYRVVMLKGDTALDMRGRCSAGQKVLASLIIRLALAETFCLNCGIIALDEPTTNLDRENIESLAHALVEIIKSRSQQRNFQLLVITHDEDFVELLGRSEYVEKFYRIKKNIDQCSEIVKCSVSSLGFNVH.

ATP contacts are provided by R13, N38, G39, G41, K42, T43, T44, V67, D69, and Q159. T43 is a Mg(2+) binding site. Position 159 (Q159) interacts with Mg(2+). Coiled-coil stretches lie at residues 228 to 359, 401 to 598, and 635 to 673; these read TSKE…QADR, RERQ…AKLN, and SQDF…ITQL. S635 carries the post-translational modification Phosphoserine; by ATM. Residues 635 to 734 form the Zinc-hook domain; sequence SQDFESDLDR…RRDEMLGLVP (100 aa). Positions 681 and 684 each coordinate Zn(2+). A Phosphothreonine modification is found at T690. 2 coiled-coil regions span residues 706–734 and 789–1079; these read RLAP…GLVP and LTDV…GRQK. The residue at position 959 (K959) is an N6-acetyllysine.

It belongs to the SMC family. RAD50 subfamily. Component of the MRN complex composed of two heterodimers RAD50 and MRE11 associated with a single NBN. The MRN complexes dimerize on DNA to form joined MRN-MRN oligomers required for DNA double-strand break repair. As part of the MRN complex, interacts with MCM8 and MCM9; the interaction recruits the complex to DNA repair sites. Component of the BASC complex, at least composed of BRCA1, MSH2, MSH6, MLH1, ATM, BLM, RAD50, MRE11 and NBN. Found in a complex with TERF2. Interacts with RINT1. Interacts with BRCA1 via its N-terminal domain. Interacts with DCLRE1C/Artemis. Interacts with MRNIP. Interacts with CYREN (via XLF motif). Interacts with C1QBP and MRE11; interaction takes place in absence of DNA damage to form the MRC (MRE11-RAD50-C1QBP) complex that inhibits the activity of MRE11. In terms of assembly, (Microbial infection) Interacts with herpes simplex virus 1 protein UL12. Requires Zn(2+) as cofactor. Phosphorylation at Ser-635 by ATM in response to DNA damage is required for double-strand break (DSB) repair. As to expression, expressed at very low level in most tissues, except in testis where it is expressed at higher level. Expressed in fibroblasts.

The protein localises to the nucleus. It localises to the chromosome. Its subcellular location is the telomere. The catalysed reaction is ATP + H2O = ADP + phosphate + H(+). In terms of biological role, component of the MRN complex, which plays a central role in double-strand break (DSB) repair, DNA recombination, maintenance of telomere integrity and meiosis. The MRN complex is involved in the repair of DNA double-strand breaks (DSBs) via homologous recombination (HR), an error-free mechanism which primarily occurs during S and G2 phases. The complex (1) mediates the end resection of damaged DNA, which generates proper single-stranded DNA, a key initial steps in HR, and is (2) required for the recruitment of other repair factors and efficient activation of ATM and ATR upon DNA damage. The MRN complex possesses single-strand endonuclease activity and double-strand-specific 3'-5' exonuclease activity, which are provided by MRE11, to initiate end resection, which is required for single-strand invasion and recombination. Within the complex, RAD50 is both required to bind DNA ends and hold them in close proximity and regulate the activity of MRE11. RAD50 provides an ATP-dependent control of MRE11 by positioning DNA ends into the MRE11 active site: ATP-binding induces a large structural change from an open form with accessible MRE11 nuclease sites into a closed form. The MRN complex is also required for DNA damage signaling via activation of the ATM and ATR kinases: the nuclease activity of MRE11 is not required to activate ATM and ATR. The MRN complex is also required for the processing of R-loops. In telomeres the MRN complex may modulate t-loop formation. In Homo sapiens (Human), this protein is DNA repair protein RAD50.